Consider the following 434-residue polypeptide: Isocitrate lyase (434 aa).

91 to 93 contributes to the substrate binding site; sequence SGW. Aspartate 157 lines the Mg(2+) pocket. The active-site Proton acceptor is the cysteine 195. Substrate is bound by residues 196–197, arginine 232, 317–321, and threonine 351; these read GH and NCSPS.

Belongs to the isocitrate lyase/PEP mutase superfamily. Isocitrate lyase family. As to quaternary structure, homotetramer. Requires Mg(2+) as cofactor.

It carries out the reaction D-threo-isocitrate = glyoxylate + succinate. The protein operates within carbohydrate metabolism; glyoxylate cycle; (S)-malate from isocitrate: step 1/2. Functionally, involved in the metabolic adaptation in response to environmental changes. Catalyzes the reversible formation of succinate and glyoxylate from isocitrate, a key step of the glyoxylate cycle, which operates as an anaplerotic route for replenishing the tricarboxylic acid cycle during growth on fatty acid substrates. This Escherichia coli O6:H1 (strain CFT073 / ATCC 700928 / UPEC) protein is Isocitrate lyase (aceA).